We begin with the raw amino-acid sequence, 428 residues long: Synaptotagmin-1 (428 aa).

Residues Met1–Asn67 are Vesicular-facing. The disordered stretch occupies residues Ala16 to Leu50. The chain crosses the membrane as a helical span at residues Leu68–Cys92. Residues Arg93 to Asn428 are Cytoplasmic-facing. Ser123 bears the Phosphoserine; by PRKC2 mark. The tract at residues Ser147 to Asn395 is phospholipid binding. C2 domains lie at Lys153–Lys272 and Lys286–His419. Residues Asp184, Asp190, Asp242, Phe243, Asp244, Ser247, Lys248, Asp250, Asp317, Asp323, Asp377, and Asp379 each coordinate Ca(2+).

This sequence belongs to the synaptotagmin family. As to quaternary structure, binds SNAP25. Isoform 3 binds SNAP25 with higher affinity. Requires Ca(2+) as cofactor.

It localises to the cytoplasmic vesicle. Its subcellular location is the secretory vesicle. It is found in the synaptic vesicle membrane. The protein resides in the synapse. Its function is as follows. Acts as inhibitor of neurotransmitter release. Overexpression leads to a decrease in the amplitude of the excitatory postsynaptic potential in dissected cholinergic and glutaminergic neurons while depletion with antisense oligonucleotides leads to an increase. Overexpression of isoform 1 blocks the reversal of synaptic depression by serotonin in sensory neurons. The chain is Synaptotagmin-1 (SYT1) from Aplysia californica (California sea hare).